A 159-amino-acid chain; its full sequence is Endoribonuclease YbeY (159 aa).

Residues histidine 125, histidine 129, and histidine 135 each coordinate Zn(2+).

The protein belongs to the endoribonuclease YbeY family. The cofactor is Zn(2+).

Its subcellular location is the cytoplasm. In terms of biological role, single strand-specific metallo-endoribonuclease involved in late-stage 70S ribosome quality control and in maturation of the 3' terminus of the 16S rRNA. The polypeptide is Endoribonuclease YbeY (Ligilactobacillus salivarius (strain UCC118) (Lactobacillus salivarius)).